The following is a 76-amino-acid chain: Omega-conotoxin-like TxO3 (76 aa).

A signal peptide spans 1 to 22 (MKLTCVVIVAVLFLTAWTFVTA). Residues 23 to 52 (VPHSSNALENLYLKAHHEMNNPEASELNKR) constitute a propeptide that is removed on maturation. Disulfide bonds link cysteine 53-cysteine 67, cysteine 60-cysteine 71, and cysteine 66-cysteine 75.

Belongs to the conotoxin O1 superfamily. In terms of tissue distribution, expressed by the venom duct.

The protein resides in the secreted. Omega-conotoxins act at presynaptic membranes, they bind and block voltage-gated calcium channels (Cav). The sequence is that of Omega-conotoxin-like TxO3 (TXO3) from Conus textile (Cloth-of-gold cone).